Reading from the N-terminus, the 119-residue chain is NAD(P)H-quinone oxidoreductase subunit M (119 aa).

The protein belongs to the complex I NdhM subunit family. In terms of assembly, NDH-1 can be composed of about 15 different subunits; different subcomplexes with different compositions have been identified which probably have different functions.

The protein resides in the cellular thylakoid membrane. It catalyses the reaction a plastoquinone + NADH + (n+1) H(+)(in) = a plastoquinol + NAD(+) + n H(+)(out). It carries out the reaction a plastoquinone + NADPH + (n+1) H(+)(in) = a plastoquinol + NADP(+) + n H(+)(out). In terms of biological role, NDH-1 shuttles electrons from an unknown electron donor, via FMN and iron-sulfur (Fe-S) centers, to quinones in the respiratory and/or the photosynthetic chain. The immediate electron acceptor for the enzyme in this species is believed to be plastoquinone. Couples the redox reaction to proton translocation, and thus conserves the redox energy in a proton gradient. Cyanobacterial NDH-1 also plays a role in inorganic carbon-concentration. In Crocosphaera subtropica (strain ATCC 51142 / BH68) (Cyanothece sp. (strain ATCC 51142)), this protein is NAD(P)H-quinone oxidoreductase subunit M.